Consider the following 261-residue polypeptide: X-box-binding protein 1 (261 aa).

At 1–185 (MVVVAAAPNP…VQAQLSPLQN (185 aa)) the chain is on the cytoplasmic side. Positions 44-93 (RGASPEAASGGLPQARKRQRLTHLSPEEKALRRKLKNRVAAQTARDRKKA) are disordered. A phosphoserine mark is found at serine 47 and serine 68. Positions 70–133 (EEKALRRKLK…HGLVVENQEL (64 aa)) constitute a bZIP domain. Positions 72–94 (KALRRKLKNRVAAQTARDRKKAR) are basic motif. The tract at residues 75 to 92 (RRKLKNRVAAQTARDRKK) is nuclear localization signal (NLS); in isoforms 1 and isoform 2. The tract at residues 98–133 (LEQQVVDLEEENQKLLLENQLLREKTHGLVVENQEL) is leucine-zipper. Residues 186–203 (ISPWILAVLTLQIQSLIS) form a helical; Signal-anchor for type II membrane protein membrane-spanning segment. Residues 204 to 261 (CWAFWTTWTQSCSSNALPQSLPAWRSSQRSTQKDPVPYQPPFLCQWGRHQPSWKPLMN) lie on the Lumenal side of the membrane. The necessary for the translational pausing of its own mRNA stretch occupies residues 235 to 261 (QKDPVPYQPPFLCQWGRHQPSWKPLMN).

This sequence belongs to the bZIP family. Isoform 2 interacts with SIRT1. Isoform 2 interacts with PIK3R1 and PIK3R2; the interactions are direct and induce translocation of XBP1 isoform 2 into the nucleus and the unfolded protein response (UPR) XBP1-dependent target genes activation in a ER stress- and/or insulin-dependent but PI3K-independent manner. Isoform 2 interacts with FOXO1; the interaction is direct and leads to FOXO1 ubiquitination and degradation via the proteasome pathway in hepatocytes. Isoform 1 interacts with HM13. Isoform 1 interacts with RNF139; the interaction induces ubiquitination and degradation of isoform 1. Isoform 1 interacts (via luminal domain) with DERL1; the interaction obviates the need for ectodomain shedding prior HM13/SPP-mediated XBP1 isoform 1 cleavage. Isoform 1 interacts with isoform 2; the interaction sequesters isoform 2 from the nucleus and enhances isoform 2 degradation in the cytoplasm. Isoform 1 interacts with HDAC3 and AKT1; the interactions occur in endothelial cell (EC) under disturbed flow. Isoform 1 interacts with the oncoprotein FOS. Isoform 2 interacts with ATF6; the interaction occurs in a ER stress-dependent manner and is required for DNA binding to the unfolded protein response element (UPRE). Isoform 2 interacts with PIK3R1; the interaction is direct and induces translocation of XBP1 isoform 2 into the nucleus and the unfolded protein response (UPR) XBP1-dependent target genes activation in a ER stress- and/or insulin-dependent but PI3K-independent manner. In terms of processing, acetylated by EP300; acetylation positively regulates the transcriptional activity of XBP1 isoform 2. Isoform 2 is deacetylated by SIRT1; deacetylation negatively regulates the transcriptional activity of XBP1 isoform 2. Post-translationally, ubiquitinated, leading to proteasome-mediated degradation in response to ER stress. X-box-binding protein 1, cytoplasmic form and luminal form are produced by intramembrane proteolytic cleavage of ER membrane-anchored isoform 1 triggered by HM13/SPP in a DERL1-RNF139-dependent and VCP/p97-independent manner. X-box-binding protein 1, luminal form is ubiquitinated leading to proteasomal degradation. In terms of tissue distribution, expressed in plasma cells in rheumatoid synovium. Over-expressed in primary breast cancer and metastatic breast cancer cells. Isoform 1 and isoform 2 are expressed at higher level in proliferating as compared to confluent quiescent endothelial cells.

Its subcellular location is the endoplasmic reticulum. It is found in the nucleus. It localises to the cytoplasm. The protein localises to the endoplasmic reticulum membrane. The protein resides in the membrane. Functions as a transcription factor during endoplasmic reticulum (ER) stress by regulating the unfolded protein response (UPR). Required for cardiac myogenesis and hepatogenesis during embryonic development, and the development of secretory tissues such as exocrine pancreas and salivary gland. Involved in terminal differentiation of B lymphocytes to plasma cells and production of immunoglobulins. Modulates the cellular response to ER stress in a PIK3R-dependent manner. Binds to the cis-acting X box present in the promoter regions of major histocompatibility complex class II genes. Involved in VEGF-induced endothelial cell (EC) proliferation and retinal blood vessel formation during embryonic development but also for angiogenesis in adult tissues under ischemic conditions. Also functions as a major regulator of the UPR in obesity-induced insulin resistance and type 2 diabetes for the management of obesity and diabetes prevention. Its function is as follows. Plays a role in the unconventional cytoplasmic splicing processing of its own mRNA triggered by the endoplasmic reticulum (ER) transmembrane endoribonuclease ERN1: upon ER stress, the emerging XBP1 polypeptide chain, as part of a mRNA-ribosome-nascent chain (R-RNC) complex, cotranslationally recruits its own unprocessed mRNA through transient docking to the ER membrane and translational pausing, therefore facilitating efficient IRE1-mediated XBP1 mRNA isoform 2 production. In endothelial cells (EC), associated with KDR, promotes IRE1-mediated XBP1 mRNA isoform 2 productions in a vascular endothelial growth factor (VEGF)-dependent manner, leading to EC proliferation and angiogenesis. Functions as a negative feed-back regulator of the potent transcription factor XBP1 isoform 2 protein levels through proteasome-mediated degradation, thus preventing the constitutive activation of the ER stress response signaling pathway. Inhibits the transactivation activity of XBP1 isoform 2 in myeloma cells. Acts as a weak transcriptional factor. Together with HDAC3, contributes to the activation of NFE2L2-mediated HMOX1 transcription factor gene expression in a PI(3)K/mTORC2/Akt-dependent signaling pathway leading to EC survival under disturbed flow/oxidative stress. Binds to the ER stress response element (ERSE) upon ER stress. Binds to the consensus 5'-GATGACGTG[TG]N(3)[AT]T-3' sequence related to cAMP responsive element (CRE)-like sequences. Binds the Tax-responsive element (TRE) present in the long terminal repeat (LTR) of T-cell leukemia virus type 1 (HTLV-I) and to the TPA response elements (TRE). Associates preferentially to the HDAC3 gene promoter region in a static flow-dependent manner. Binds to the CDH5/VE-cadherin gene promoter region. In terms of biological role, functions as a stress-inducible potent transcriptional activator during endoplasmic reticulum (ER) stress by inducing unfolded protein response (UPR) target genes via binding to the UPR element (UPRE). Up-regulates target genes encoding ER chaperones and ER-associated degradation (ERAD) components to enhance the capacity of productive folding and degradation mechanism, respectively, in order to maintain the homeostasis of the ER under ER stress. Plays a role in the production of immunoglobulins and interleukin-6 in the presence of stimuli required for plasma cell differentiation. Induces phospholipid biosynthesis and ER expansion. Contributes to the VEGF-induced endothelial cell (EC) growth and proliferation in a Akt/GSK-dependent and/or -independent signaling pathway, respectively, leading to beta-catenin nuclear translocation and E2F2 gene expression. Promotes umbilical vein EC apoptosis and atherosclerotisis development in a caspase-dependent signaling pathway, and contributes to VEGF-induced EC proliferation and angiogenesis in adult tissues under ischemic conditions. Involved in the regulation of endostatin-induced autophagy in EC through BECN1 transcriptional activation. Plays a role as an oncogene by promoting tumor progression: stimulates zinc finger protein SNAI1 transcription to induce epithelial-to-mesenchymal (EMT) transition, cell migration and invasion of breast cancer cells. Involved in adipocyte differentiation by regulating lipogenic gene expression during lactation. Plays a role in the survival of both dopaminergic neurons of the substantia nigra pars compacta (SNpc), by maintaining protein homeostasis and of myeloma cells. Increases insulin sensitivity in the liver as a response to a high carbohydrate diet, resulting in improved glucose tolerance. Also improves glucose homeostasis in an ER stress- and/or insulin-independent manner through both binding and proteasome-induced degradation of the transcription factor FOXO1, hence resulting in suppression of gluconeogenic genes expression and in a reduction of blood glucose levels. Controls the induction of de novo fatty acid synthesis in hepatocytes by regulating the expression of a subset of lipogenic genes in an ER stress- and UPR-independent manner. Associates preferentially to the HDAC3 gene promoter region in a disturbed flow-dependent manner. Binds to the BECN1 gene promoter region. Binds to the CDH5/VE-cadherin gene promoter region. Binds to the ER stress response element (ERSE) upon ER stress. Binds to the 5'-CCACG-3' motif in the PPARG promoter. In Homo sapiens (Human), this protein is X-box-binding protein 1.